A 351-amino-acid chain; its full sequence is Transaldolase (351 aa).

The Schiff-base intermediate with substrate role is filled by lysine 138.

Belongs to the transaldolase family. Type 2 subfamily.

The protein resides in the cytoplasm. The enzyme catalyses D-sedoheptulose 7-phosphate + D-glyceraldehyde 3-phosphate = D-erythrose 4-phosphate + beta-D-fructose 6-phosphate. It participates in carbohydrate degradation; pentose phosphate pathway; D-glyceraldehyde 3-phosphate and beta-D-fructose 6-phosphate from D-ribose 5-phosphate and D-xylulose 5-phosphate (non-oxidative stage): step 2/3. Transaldolase is important for the balance of metabolites in the pentose-phosphate pathway. In Neisseria meningitidis serogroup C (strain 053442), this protein is Transaldolase.